A 228-amino-acid chain; its full sequence is Large ribosomal subunit protein bL25 (228 aa).

The disordered stretch occupies residues 196–228; it reads EEAAVAEAQSAESAEGKAEAEAEATNEKNKSEA. The span at 209–228 shows a compositional bias: basic and acidic residues; it reads AEGKAEAEAEATNEKNKSEA.

This sequence belongs to the bacterial ribosomal protein bL25 family. CTC subfamily. Part of the 50S ribosomal subunit; part of the 5S rRNA/L5/L18/L25 subcomplex. Contacts the 5S rRNA. Binds to the 5S rRNA independently of L5 and L18.

Functionally, this is one of the proteins that binds to the 5S RNA in the ribosome where it forms part of the central protuberance. This chain is Large ribosomal subunit protein bL25, found in Methylorubrum extorquens (strain PA1) (Methylobacterium extorquens).